The chain runs to 268 residues: Putative hydro-lyase A1S_1268 (268 aa).

It belongs to the D-glutamate cyclase family.

The protein is Putative hydro-lyase A1S_1268 of Acinetobacter baumannii (strain ATCC 17978 / DSM 105126 / CIP 53.77 / LMG 1025 / NCDC KC755 / 5377).